The following is a 245-amino-acid chain: NAD(P)H-quinone oxidoreductase subunit K (245 aa).

4 residues coordinate [4Fe-4S] cluster: cysteine 58, cysteine 59, cysteine 123, and cysteine 154. A disordered region spans residues serine 210–glycine 245. Residues lysine 236–glycine 245 are compositionally biased toward basic and acidic residues.

Belongs to the complex I 20 kDa subunit family. As to quaternary structure, NDH-1 can be composed of about 15 different subunits; different subcomplexes with different compositions have been identified which probably have different functions. The cofactor is [4Fe-4S] cluster.

Its subcellular location is the cellular thylakoid membrane. It catalyses the reaction a plastoquinone + NADH + (n+1) H(+)(in) = a plastoquinol + NAD(+) + n H(+)(out). It carries out the reaction a plastoquinone + NADPH + (n+1) H(+)(in) = a plastoquinol + NADP(+) + n H(+)(out). Its function is as follows. NDH-1 shuttles electrons from an unknown electron donor, via FMN and iron-sulfur (Fe-S) centers, to quinones in the respiratory and/or the photosynthetic chain. The immediate electron acceptor for the enzyme in this species is believed to be plastoquinone. Couples the redox reaction to proton translocation, and thus conserves the redox energy in a proton gradient. Cyanobacterial NDH-1 also plays a role in inorganic carbon-concentration. The polypeptide is NAD(P)H-quinone oxidoreductase subunit K (Nostoc punctiforme (strain ATCC 29133 / PCC 73102)).